Here is a 472-residue protein sequence, read N- to C-terminus: Ribosomal protein uS12 methylthiotransferase RimO (472 aa).

Positions N33–P143 constitute an MTTase N-terminal domain. Residues C42, C78, C107, C175, C179, and C182 each coordinate [4Fe-4S] cluster. Residues L161–E398 form the Radical SAM core domain. Positions A401–D467 constitute a TRAM domain.

This sequence belongs to the methylthiotransferase family. RimO subfamily. [4Fe-4S] cluster serves as cofactor.

It localises to the cytoplasm. It catalyses the reaction L-aspartate(89)-[ribosomal protein uS12]-hydrogen + (sulfur carrier)-SH + AH2 + 2 S-adenosyl-L-methionine = 3-methylsulfanyl-L-aspartate(89)-[ribosomal protein uS12]-hydrogen + (sulfur carrier)-H + 5'-deoxyadenosine + L-methionine + A + S-adenosyl-L-homocysteine + 2 H(+). Catalyzes the methylthiolation of an aspartic acid residue of ribosomal protein uS12. This Shewanella baltica (strain OS155 / ATCC BAA-1091) protein is Ribosomal protein uS12 methylthiotransferase RimO.